Consider the following 203-residue polypeptide: Ras-related protein RABG3b (203 aa).

15 to 22 (GDSGVGKT) is a GTP binding site. An Effector region motif is present at residues 37–45 (YKATIGADF). Residues 63–67 (DTAGQ), 125–128 (NKVD), and 158–159 (SA) contribute to the GTP site. 2 S-geranylgeranyl cysteine lipidation sites follow: Cys201 and Cys203. Position 203 is a cysteine methyl ester (Cys203).

The protein belongs to the small GTPase superfamily. Rab family. In terms of assembly, interacts with VPS39. In terms of tissue distribution, expressed in xylem cells of inflorescence stems.

The protein resides in the cell membrane. In terms of biological role, intracellular vesicle trafficking and protein transport. Functions in autophagy. Involved in xylem and tracheary element differentiation. This Arabidopsis thaliana (Mouse-ear cress) protein is Ras-related protein RABG3b (RABG3B).